The sequence spans 302 residues: Protein FdhE homolog (302 aa).

It belongs to the FdhE family.

The protein localises to the cytoplasm. In terms of biological role, necessary for formate dehydrogenase activity. The polypeptide is Protein FdhE homolog (Shewanella oneidensis (strain ATCC 700550 / JCM 31522 / CIP 106686 / LMG 19005 / NCIMB 14063 / MR-1)).